The primary structure comprises 529 residues: Peptide chain release factor 3 (529 aa).

In terms of domain architecture, tr-type G spans 11-280 (ATRRTFAIIS…GLVQWAPPPQ (270 aa)). Residues 20–27 (SHPDAGKT), 88–92 (DTPGH), and 142–145 (NKLD) each bind GTP.

This sequence belongs to the TRAFAC class translation factor GTPase superfamily. Classic translation factor GTPase family. PrfC subfamily.

It localises to the cytoplasm. Functionally, increases the formation of ribosomal termination complexes and stimulates activities of RF-1 and RF-2. It binds guanine nucleotides and has strong preference for UGA stop codons. It may interact directly with the ribosome. The stimulation of RF-1 and RF-2 is significantly reduced by GTP and GDP, but not by GMP. The chain is Peptide chain release factor 3 from Alcanivorax borkumensis (strain ATCC 700651 / DSM 11573 / NCIMB 13689 / SK2).